Here is a 217-residue protein sequence, read N- to C-terminus: Translation initiation factor 6 (217 aa).

It belongs to the eIF-6 family.

Functionally, binds to the 50S ribosomal subunit and prevents its association with the 30S ribosomal subunit to form the 70S initiation complex. The sequence is that of Translation initiation factor 6 from Picrophilus torridus (strain ATCC 700027 / DSM 9790 / JCM 10055 / NBRC 100828 / KAW 2/3).